We begin with the raw amino-acid sequence, 141 residues long: Large ribosomal subunit protein uL11 (141 aa).

It belongs to the universal ribosomal protein uL11 family. Part of the ribosomal stalk of the 50S ribosomal subunit. Interacts with L10 and the large rRNA to form the base of the stalk. L10 forms an elongated spine to which L12 dimers bind in a sequential fashion forming a multimeric L10(L12)X complex. Post-translationally, one or more lysine residues are methylated.

Forms part of the ribosomal stalk which helps the ribosome interact with GTP-bound translation factors. The polypeptide is Large ribosomal subunit protein uL11 (Clostridium kluyveri (strain ATCC 8527 / DSM 555 / NBRC 12016 / NCIMB 10680 / K1)).